Reading from the N-terminus, the 309-residue chain is Solute carrier family 25 member 48 (309 aa).

Solcar repeat units lie at residues 3–86 (VFQL…TQRL), 99–209 (CSML…FCNW), and 218–305 (PPPC…SLQF). 6 consecutive transmembrane segments (helical) span residues 9–29 (FLAG…LDTV), 61–81 (GLSF…GFFS), 105–125 (TVAS…VDLV), 186–206 (GAMI…YTLF), 218–238 (PPPC…WVTA), and 281–299 (ATVN…FLGY).

Belongs to the mitochondrial carrier (TC 2.A.29) family.

It localises to the mitochondrion inner membrane. The protein is Solute carrier family 25 member 48 (slc25a48) of Danio rerio (Zebrafish).